Reading from the N-terminus, the 798-residue chain is Bromodomain-containing protein 2 (798 aa).

M1 is subject to N-acetylmethionine. The tract at residues 1-21 is disordered; it reads MLQNVTPHKLPGEGNAGLLGL. T6 carries the post-translational modification Phosphothreonine. S36 carries the post-translational modification Phosphoserine. A disordered region spans residues 53–72; sequence LQLAPANPPPPEVSNPKKPG. The region spanning 73–179 is the Bromo 1 domain; sequence RVTNQLQYLH…KIFLQKVASM (107 aa). Positions 111, 154, 155, 156, 159, and 160 each coordinate a protein. 3 disordered regions span residues 267-348, 454-645, and 736-798; these read PPAQ…LSEQ, DEPL…YDEK, and KRLQ…SDSG. The span at 284 to 297 shows a compositional bias: low complexity; the sequence is TTTPTPTAILAPGS. A phosphoserine mark is found at S297, S300, and S304. Residues 315–331 show a composition bias toward basic and acidic residues; it reads MRRESGRPIKPPRKDLP. The region spanning 343–452 is the Bromo 2 domain; sequence GKLSEQLKHC…DVFEFRYAKM (110 aa). Acidic residues predominate over residues 480 to 512; that stretch reads SSEESSSESSSEEEEEEEEDEDEEESESSDSEE. Over residues 542–564 the composition is skewed to basic residues; the sequence is KPKRKREKKEKKKKRKAEKHRGR. The Nuclear localization signal motif lies at 553–557; the sequence is KKKRK. The 83-residue stretch at 630–712 folds into the NET domain; the sequence is DSEEEEESRP…SCLRKKPRKP (83 aa). Position 631 is a phosphoserine (S631). Low complexity predominate over residues 772-792; the sequence is SASSSSSDSSSSSSSSSSSDT.

The protein belongs to the BET family. In terms of assembly, homodimer. Interacts with E2F1. Interacts with (acetylated) STAT3; promoting STAT3 recruitment to chromatin. Interacts with CTCF; promoting BRD2 recruitment to chromatin. Predominantly expressed in the testis, followed by ovary, placenta, embryo and to a lower extent in somatic tissues.

The protein localises to the nucleus. It localises to the chromosome. Chromatin reader protein that specifically recognizes and binds histone H4 acetylated at 'Lys-5' and 'Lys-12' (H4K5ac and H4K12ac, respectively), thereby controlling gene expression and remodeling chromatin structures. Recruits transcription factors and coactivators to target gene sites, and activates RNA polymerase II machinery for transcriptional elongation. Plays a key role in genome compartmentalization via its association with CTCF and cohesin: recruited to chromatin by CTCF and promotes formation of topologically associating domains (TADs) via its ability to bind acetylated histones, contributing to CTCF boundary formation and enhancer insulation. Also recognizes and binds acetylated non-histone proteins, such as STAT3. Involved in inflammatory response by regulating differentiation of naive CD4(+) T-cells into T-helper Th17: recognizes and binds STAT3 acetylated at 'Lys-87', promoting STAT3 recruitment to chromatin. In addition to acetylated lysines, also recognizes and binds lysine residues on histones that are both methylated and acetylated on the same side chain to form N6-acetyl-N6-methyllysine (Kacme), an epigenetic mark of active chromatin associated with increased transcriptional initiation. Specifically binds histone H4 acetyl-methylated at 'Lys-5' and 'Lys-12' (H4K5acme and H4K12acme, respectively). This Mus musculus (Mouse) protein is Bromodomain-containing protein 2.